Reading from the N-terminus, the 254-residue chain is ATP synthase subunit a (254 aa).

Residues 1–6 (MAFLIH) constitute a propeptide, removed in mature form. Transmembrane regions (helical) follow at residues 32 to 52 (LTNLGLYTILTVYLVLALHIM), 83 to 103 (IGAANEMYLPFIYSLFFFILI), 119 to 139 (SIMVSIGLSMTIFIGVTILGL), 146 to 166 (FFSFFVPSGTPLGLVPLLVPI), 182 to 202 (LFANVTAGHVLMKILAGFLAP), 207 to 227 (TFIISVLTVLPFIIFTGIIGL), and 228 to 248 (EIAVSFIQAYVFCVLTCSYLK).

This sequence belongs to the ATPase A chain family. F-type ATPases have 2 components, CF(1) - the catalytic core - and CF(0) - the membrane proton channel. CF(1) has five subunits: alpha(3), beta(3), gamma(1), delta(1), epsilon(1). CF(0) has three main subunits: a, b and c.

It is found in the mitochondrion inner membrane. Functionally, mitochondrial membrane ATP synthase (F(1)F(0) ATP synthase or Complex V) produces ATP from ADP in the presence of a proton gradient across the membrane which is generated by electron transport complexes of the respiratory chain. F-type ATPases consist of two structural domains, F(1) - containing the extramembraneous catalytic core and F(0) - containing the membrane proton channel, linked together by a central stalk and a peripheral stalk. During catalysis, ATP synthesis in the catalytic domain of F(1) is coupled via a rotary mechanism of the central stalk subunits to proton translocation. Key component of the proton channel; it may play a direct role in the translocation of protons across the membrane. This chain is ATP synthase subunit a (ATP6), found in Mycosarcoma maydis (Corn smut fungus).